The chain runs to 141 residues: VLSANDKTNVKTVFTKITGHAEDYGAETLERMFITYPPTKTYFPHFDLHHGSAQIKAHGKKVVGALIEAVNHIDDIAGALSKLSDLHAQKLRVDPVNFKLLGQCFLVVVAIHHPSVLTPEVHASLDKFLCAVGNVLSAKYR.

Residues 1–141 (VLSANDKTNV…VGNVLSAKYR (141 aa)) enclose the Globin domain. H58 serves as a coordination point for O2. Residue H87 participates in heme b binding.

This sequence belongs to the globin family. In terms of assembly, heterotetramer of two alpha chains and two beta chains. In terms of tissue distribution, red blood cells.

Functionally, involved in oxygen transport from the lung to the various peripheral tissues. The sequence is that of Hemoglobin subunit alpha-A (HBAA) from Trigonoceps occipitalis (White-headed vulture).